Here is a 532-residue protein sequence, read N- to C-terminus: Membrane protein insertase YidC (532 aa).

5 consecutive transmembrane segments (helical) span residues 7 to 27 (FFIFAFLFVSFLLWQAWQSQM), 336 to 356 (LTILYSIIGNWGFSIILITFI), 413 to 433 (GGFLPIFIQMPIFLSLYYMLI), 450 to 470 (LSSQDPYYVLPVIMGLTMFFI), and 492 to 512 (PVIFTAFFLWFPSGLVLYYII).

Belongs to the OXA1/ALB3/YidC family. Type 1 subfamily. Interacts with the Sec translocase complex via SecD. Specifically interacts with transmembrane segments of nascent integral membrane proteins during membrane integration.

The protein localises to the cell membrane. Functionally, required for the insertion and/or proper folding and/or complex formation of integral membrane proteins into the membrane. Involved in integration of membrane proteins that insert both dependently and independently of the Sec translocase complex, as well as at least some lipoproteins. Aids folding of multispanning membrane proteins. The sequence is that of Membrane protein insertase YidC from Buchnera aphidicola subsp. Acyrthosiphon pisum (strain 5A).